The primary structure comprises 559 residues: Glypican-1 (559 aa).

A signal peptide spans 1 to 23 (MELRARGWWLLYAAAVLVACARG). Cystine bridges form between Cys-32–Cys-68, Cys-62–Cys-256, Cys-69–Cys-259, Cys-191–Cys-343, Cys-246–Cys-279, Cys-268–Cys-415, and Cys-272–Cys-401. Residues Asn-79 and Asn-116 are each glycosylated (N-linked (GlcNAc...) asparagine). The interval 478-539 (FQDASDDGSG…SAAAPTPPQA (62 aa)) is disordered. O-linked (Xyl...) (heparan sulfate) serine glycans are attached at residues Ser-486, Ser-488, and Ser-490. The GPI-anchor amidated serine moiety is linked to residue Ser-530. The propeptide at 531–559 (AAAPTPPQASPLLLLGLALALPAVAPRGR) is removed in mature form.

This sequence belongs to the glypican family. S-nitrosylated in a Cu(2+)-dependent manner. Nitric acid (NO) is released from the nitrosylated cysteines by ascorbate or by some other reducing agent, in a Cu(2+) or Zn(2+) dependent manner. This free nitric oxide is then capable of cleaving the heparan sulfate side chains. In terms of processing, N- and O-glycosylated. N-glycosylation is mainly of the complex type containing sialic acid. O-glycosylated with heparan sulfate. The heparan sulfate chains can be cleaved either by the action of heparanase or, degraded by a deaminative process that uses nitric oxide (NO) released from the S-nitrosylated cysteines. This process is triggered by ascorbate, or by some other reducing agent, in a Cu(2+)- or Zn(2+) dependent manner. Cu(2+) ions are provided by ceruloproteins such as APP, PRNP or CP which associate with GCP1 in intracellular compartments or lipid rafts. Post-translationally, shed from the cell surface probably by further cleavage.

The protein localises to the cell membrane. The protein resides in the endosome. It localises to the secreted. Its subcellular location is the extracellular space. Its function is as follows. Cell surface proteoglycan that bears heparan sulfate. Binds, via the heparan sulfate side chains, alpha-4 (V) collagen and participates in Schwann cell myelination. May act as a catalyst in increasing the rate of conversion of prion protein PRPN (C) to PRNP (Sc) via associating (via the heparan sulfate side chains) with both forms of PRPN, targeting them to lipid rafts and facilitating their interaction. Required for proper skeletal muscle differentiation by sequestering FGF2 in lipid rafts preventing its binding to receptors (FGFRs) and inhibiting the FGF-mediated signaling. In Bos taurus (Bovine), this protein is Glypican-1 (GPC1).